The following is a 55-amino-acid chain: Large ribosomal subunit protein bL33 (55 aa).

It belongs to the bacterial ribosomal protein bL33 family.

This Sphingopyxis alaskensis (strain DSM 13593 / LMG 18877 / RB2256) (Sphingomonas alaskensis) protein is Large ribosomal subunit protein bL33.